A 333-amino-acid chain; its full sequence is Glycerol-3-phosphate dehydrogenase [NAD(P)+] (333 aa).

NADPH is bound by residues Trp12, His31, and Lys105. Sn-glycerol 3-phosphate-binding residues include Lys105, Gly134, and Ser136. Ala138 contributes to the NADPH binding site. Sn-glycerol 3-phosphate contacts are provided by Lys189, Asp242, Ser252, Arg253, and Asn254. Lys189 acts as the Proton acceptor in catalysis. Residue Arg253 coordinates NADPH. NADPH-binding residues include Val278 and Glu280.

The protein belongs to the NAD-dependent glycerol-3-phosphate dehydrogenase family.

Its subcellular location is the cytoplasm. It catalyses the reaction sn-glycerol 3-phosphate + NAD(+) = dihydroxyacetone phosphate + NADH + H(+). It carries out the reaction sn-glycerol 3-phosphate + NADP(+) = dihydroxyacetone phosphate + NADPH + H(+). Its pathway is membrane lipid metabolism; glycerophospholipid metabolism. Catalyzes the reduction of the glycolytic intermediate dihydroxyacetone phosphate (DHAP) to sn-glycerol 3-phosphate (G3P), the key precursor for phospholipid synthesis. The chain is Glycerol-3-phosphate dehydrogenase [NAD(P)+] from Brachyspira hyodysenteriae (strain ATCC 49526 / WA1).